Here is a 310-residue protein sequence, read N- to C-terminus: AMMECR1-like protein (310 aa).

The tract at residues 26-95 (LSGSGTHSHG…LSPLPRPNGT (70 aa)) is disordered. Polar residues predominate over residues 28–66 (GSGTHSHGNQSTTVPGSSSGPLQNHQHVDSSSGRENVSD). Position 74 is a phosphoserine (Ser-74). Positions 97 to 291 (NTTKNLVVTA…ISYAEYIASR (195 aa)) constitute an AMMECR1 domain.

The polypeptide is AMMECR1-like protein (AMMECR1L) (Homo sapiens (Human)).